The following is a 510-amino-acid chain: Beta-glucosidase 26 (510 aa).

Residues 1–27 (MRKFIAALRLALAAAAHLLLTLPPAQC) form the signal peptide. An a beta-D-glucoside-binding site is contributed by Gln-59. Residues Asn-87 and Asn-127 are each glycosylated (N-linked (GlcNAc...) asparagine). Residues His-160 and 205-206 (NE) each bind a beta-D-glucoside. Glu-206 serves as the catalytic Proton donor. The cysteines at positions 225 and 228 are disulfide-linked. Residue Asn-233 is glycosylated (N-linked (GlcNAc...) asparagine). Positions 345 and 416 each coordinate a beta-D-glucoside. The active-site Nucleophile is the Glu-416. Asn-424 is a glycosylation site (N-linked (GlcNAc...) asparagine). Residues Trp-463, 470–471 (EW), and Phe-479 contribute to the a beta-D-glucoside site.

This sequence belongs to the glycosyl hydrolase 1 family.

The enzyme catalyses Hydrolysis of terminal, non-reducing beta-D-glucosyl residues with release of beta-D-glucose.. Functionally, hydrolyzes p-nitrophenyl beta-D-glucoside, p-nitrophenyl beta-D-mannoside, p-nitrophenyl beta-D-galactoside, p-nitrophenyl beta-D-xyloside, p-nitrophenyl beta-D-fucoside, p-nitrophenyl beta-L-arabinoside, cello-oligosaccharides, laminari-oligosaccharides and sophorose. The chain is Beta-glucosidase 26 (BGLU26) from Oryza sativa subsp. japonica (Rice).